Here is a 909-residue protein sequence, read N- to C-terminus: Glucan endo-1,3-beta-D-glucosidase ARB_01444 (909 aa).

The N-terminal stretch at 1-23 is a signal peptide; it reads MKPYTTLPGVAVLVSLLTQSAHA. The segment at 136–187 is disordered; the sequence is KRSPAPQRHPPAPTKATAGYQFTNCTSTSNPGPTATSPTSGIPSQPSAPPAT. Over residues 155-180 the composition is skewed to polar residues; it reads YQFTNCTSTSNPGPTATSPTSGIPSQ. Residues asparagine 159, asparagine 239, and asparagine 259 are each glycosylated (N-linked (GlcNAc...) asparagine). The beta-sandwich subdomain stretch occupies residues 191–430; that stretch reads QDIFQPIAKD…KGVIQVAKNP (240 aa). In terms of domain architecture, GH81 spans 191–909; sequence QDIFQPIAKD…AGEYSTYIAL (719 aa). An alpha/beta subdomain region spans residues 431–524; sequence SAEEGEGIYD…GDSWTMVEGN (94 aa). The segment at 539-909 is (alpha/beta)6 barrel subdomain; that stretch reads SSQVTLSEGA…AGEYSTYIAL (371 aa). Residue aspartate 654 is part of the active site. (1,3-beta-D-glucosyl)n contacts are provided by histidine 658, aspartate 727, glutamate 729, and glutamate 733. Catalysis depends on residues glutamate 729 and glutamate 733. The tract at residues 798–800 is may provide specificity for triple-helical beta-glucan; that stretch reads KID. A (1,3-beta-D-glucosyl)n-binding site is contributed by tyrosine 811.

Belongs to the glycosyl hydrolase 81 family.

The protein localises to the secreted. The protein resides in the cell wall. The enzyme catalyses Hydrolysis of (1-&gt;3)-beta-D-glucosidic linkages in (1-&gt;3)-beta-D-glucans.. In terms of biological role, cleaves internal linkages in 1,3-beta-glucan. Probably involved in cell separation after cytokinesis. The chain is Glucan endo-1,3-beta-D-glucosidase ARB_01444 from Arthroderma benhamiae (strain ATCC MYA-4681 / CBS 112371) (Trichophyton mentagrophytes).